The following is a 623-amino-acid chain: DELLA protein RHT-1 (623 aa).

The disordered stretch occupies residues 1–27; the sequence is MKREYQDAGGSGGGGGGMGSSEDKMMV. Residues 9–19 show a composition bias toward gly residues; sequence GGSGGGGGGMG. A DELLA motif motif is present at residues 38–42; sequence DELLA. Disordered stretches follow at residues 109–138 and 159–201; these read LNAPPPPLPPAPQLNASTSSTVTGSGGYFD and AGAT…GARS. The span at 111-120 shows a compositional bias: pro residues; the sequence is APPPPLPPAP. 2 stretches are compositionally biased toward low complexity: residues 121–131 and 181–201; these read QLNASTSSTVT and GGSSTSSSSSSSSSLGGGARS. In terms of domain architecture, GRAS spans 225-619; it reads VDTQEAGIRL…RPLIATSAWR (395 aa). The leucine repeat I (LRI) stretch occupies residues 232–288; it reads IRLVHALLACAEAVQQENLSAAEALVKQIPLLAASQGGAMRKVAAYFGEALARRVFR. The LxCxE motif signature appears at 239–243; that stretch reads LACAE. A VHIID region spans residues 307–372; that stretch reads HAHFYESCPY…GGPPSFRLTG (66 aa). A VHIID motif is present at residues 338 to 342; the sequence is VHVVD. A leucine repeat II (LRII) region spans residues 386–425; that stretch reads QVGWKLAQFAHTIRVDFQYRGLVAATLADLEPFMLQPEGE. A PFYRE region spans residues 435–540; it reads IAVNSVFEMH…EVYLGRQICN (106 aa). Positions 543–619 are SAW; that stretch reads ACEGAERTER…RPLIATSAWR (77 aa).

The protein belongs to the GRAS family. DELLA subfamily. Phosphorylated. Post-translationally, ubiquitinated. Upon GA application it is ubiquitinated, leading to its subsequent degradation.

Its subcellular location is the nucleus. In terms of biological role, probable transcriptional regulator that acts as a repressor of the gibberellin (GA) signaling pathway. Probably acts by participating in large multiprotein complexes that repress transcription of GA-inducible genes. Upon GA application, it is degraded by the proteasome, allowing the GA signaling pathway. The sequence is that of DELLA protein RHT-1 (RHT1) from Triticum aestivum (Wheat).